The primary structure comprises 268 residues: Shikimate dehydrogenase (NADP(+)) (268 aa).

Shikimate contacts are provided by residues 13 to 15 and Thr-60; that span reads SLS. The Proton acceptor role is filled by Lys-64. Asp-76 is a binding site for NADP(+). Residues Asn-85 and Asp-100 each coordinate shikimate. NADP(+)-binding positions include 124–128, 148–153, and Ile-209; these read GAGGA and NRTMSR. A shikimate-binding site is contributed by Tyr-211. An NADP(+)-binding site is contributed by Gly-232.

The protein belongs to the shikimate dehydrogenase family. Homodimer.

The enzyme catalyses shikimate + NADP(+) = 3-dehydroshikimate + NADPH + H(+). It functions in the pathway metabolic intermediate biosynthesis; chorismate biosynthesis; chorismate from D-erythrose 4-phosphate and phosphoenolpyruvate: step 4/7. In terms of biological role, involved in the biosynthesis of the chorismate, which leads to the biosynthesis of aromatic amino acids. Catalyzes the reversible NADPH linked reduction of 3-dehydroshikimate (DHSA) to yield shikimate (SA). In Staphylococcus haemolyticus (strain JCSC1435), this protein is Shikimate dehydrogenase (NADP(+)).